The chain runs to 338 residues: Methionine import ATP-binding protein MetN 2 (338 aa).

Residues 2 to 242 (IEIEKVCVDF…PQHAFTQQLV (241 aa)) enclose the ABC transporter domain. 39 to 46 (GTSGAGKS) is an ATP binding site.

This sequence belongs to the ABC transporter superfamily. Methionine importer (TC 3.A.1.24) family. As to quaternary structure, the complex is composed of two ATP-binding proteins (MetN), two transmembrane proteins (MetI) and a solute-binding protein (MetQ).

It is found in the cell inner membrane. It carries out the reaction L-methionine(out) + ATP + H2O = L-methionine(in) + ADP + phosphate + H(+). It catalyses the reaction D-methionine(out) + ATP + H2O = D-methionine(in) + ADP + phosphate + H(+). Functionally, part of the ABC transporter complex MetNIQ involved in methionine import. Responsible for energy coupling to the transport system. The sequence is that of Methionine import ATP-binding protein MetN 2 from Salmonella typhimurium (strain LT2 / SGSC1412 / ATCC 700720).